The following is a 234-amino-acid chain: Sugar fermentation stimulation protein homolog (234 aa).

Belongs to the SfsA family.

In Citrobacter koseri (strain ATCC BAA-895 / CDC 4225-83 / SGSC4696), this protein is Sugar fermentation stimulation protein homolog.